A 129-amino-acid polypeptide reads, in one-letter code: D-ribose pyranase (129 aa).

The active-site Proton donor is H20. Residues D28, H96, and 118–120 (YAN) contribute to the substrate site.

Belongs to the RbsD / FucU family. RbsD subfamily. In terms of assembly, homodecamer.

Its subcellular location is the cytoplasm. It carries out the reaction beta-D-ribopyranose = beta-D-ribofuranose. The protein operates within carbohydrate metabolism; D-ribose degradation; D-ribose 5-phosphate from beta-D-ribopyranose: step 1/2. Functionally, catalyzes the interconversion of beta-pyran and beta-furan forms of D-ribose. In Streptomyces avermitilis (strain ATCC 31267 / DSM 46492 / JCM 5070 / NBRC 14893 / NCIMB 12804 / NRRL 8165 / MA-4680), this protein is D-ribose pyranase.